Reading from the N-terminus, the 477-residue chain is UDP-glycosyltransferase 71K1 (477 aa).

Residues serine 285, tryptophan 350–alanine 351, histidine 368–glutamate 376, and tyrosine 390–glutamine 393 each bind UDP-alpha-D-glucose.

It belongs to the UDP-glycosyltransferase family.

In terms of biological role, glycosyltransferase that possesses chalcone and flavonol 2'-O-glycosyltransferase activity. Converts phloretin to phlorizin (phloretin 2'-O-glucoside), a potent antioxidant. Possesses glycosyltransferase activity toward quercetin, isoliquiritigenin, butein and caffeic acid. This Malus domestica (Apple) protein is UDP-glycosyltransferase 71K1.